The primary structure comprises 455 residues: Glutamyl-tRNA reductase (455 aa).

Residues 49 to 52, serine 109, 114 to 116, and glutamine 120 contribute to the substrate site; these read TCNR and EAQ. Cysteine 50 functions as the Nucleophile in the catalytic mechanism. Residue 190-195 coordinates NADP(+); that stretch reads GAGAMG.

The protein belongs to the glutamyl-tRNA reductase family. Homodimer.

The catalysed reaction is (S)-4-amino-5-oxopentanoate + tRNA(Glu) + NADP(+) = L-glutamyl-tRNA(Glu) + NADPH + H(+). Its pathway is porphyrin-containing compound metabolism; protoporphyrin-IX biosynthesis; 5-aminolevulinate from L-glutamyl-tRNA(Glu): step 1/2. In terms of biological role, catalyzes the NADPH-dependent reduction of glutamyl-tRNA(Glu) to glutamate 1-semialdehyde (GSA). The chain is Glutamyl-tRNA reductase from Salinispora tropica (strain ATCC BAA-916 / DSM 44818 / JCM 13857 / NBRC 105044 / CNB-440).